Here is a 344-residue protein sequence, read N- to C-terminus: Succinylglutamate desuccinylase (344 aa).

Residues His63, Glu66, and His160 each contribute to the Zn(2+) site. Glu224 is an active-site residue.

This sequence belongs to the AspA/AstE family. Succinylglutamate desuccinylase subfamily. It depends on Zn(2+) as a cofactor.

It catalyses the reaction N-succinyl-L-glutamate + H2O = L-glutamate + succinate. The protein operates within amino-acid degradation; L-arginine degradation via AST pathway; L-glutamate and succinate from L-arginine: step 5/5. In terms of biological role, transforms N(2)-succinylglutamate into succinate and glutamate. The protein is Succinylglutamate desuccinylase of Shewanella baltica (strain OS223).